The primary structure comprises 341 residues: GDT1-like protein 1, chloroplastic (341 aa).

The segment covering 1-13 has biased composition (low complexity); sequence MASVASSTVFASS. Disordered regions lie at residues 1-41 and 54-76; these read MASV…GRSV and VVTRASDEEGPPEPAGQGRGGGR. Residues 1–57 constitute a chloroplast transit peptide; the sequence is MASVASSTVFASSLPHHRATTRAPPTPPRIPRRARLPGRSVVSCLPKRGSEKLVVTR. 7 helical membrane passes run 79–99, 117–137, 158–178, 203–223, 246–266, 286–306, and 318–338; these read PSLDASSCGLALAAAAGVLML, VVGDLGDISTGFASAFLLIFF, AIIFLGTFGALAVMTIISVVL, FLAACLLVYYGITTLLDAASG, GAGIISAASTIASTFVLVFIA, LGVIAGSLAGHAVATLIAVLG, and IVAYIGGSLFLAFAAVTLVEI.

It belongs to the GDT1 family.

It is found in the plastid. Its subcellular location is the chloroplast membrane. This Oryza sativa subsp. japonica (Rice) protein is GDT1-like protein 1, chloroplastic.